Consider the following 614-residue polypeptide: Chaperone protein HtpG (614 aa).

The tract at residues 1 to 324 (MSQIETKEFQ…SEELPLNISR (324 aa)) is a; substrate-binding. A b region spans residues 325-537 (ETMQDSALIA…SHYGTHSMQR (213 aa)). Residues 538–614 (MMQLMNRDLQ…LNEILEKALR (77 aa)) are c.

It belongs to the heat shock protein 90 family. In terms of assembly, homodimer.

It is found in the cytoplasm. In terms of biological role, molecular chaperone. Has ATPase activity. In Desulfitobacterium hafniense (strain Y51), this protein is Chaperone protein HtpG.